Consider the following 87-residue polypeptide: Small ribosomal subunit protein bS20 (87 aa).

Positions 1–11 are enriched in basic residues; it reads MANIKSKKKRI. The disordered stretch occupies residues 1-25; it reads MANIKSKKKRIKTNEKARQRNKAIR.

It belongs to the bacterial ribosomal protein bS20 family.

In terms of biological role, binds directly to 16S ribosomal RNA. The sequence is that of Small ribosomal subunit protein bS20 from Corynebacterium kroppenstedtii (strain DSM 44385 / JCM 11950 / CIP 105744 / CCUG 35717).